The chain runs to 492 residues: MDLYTLLTSALCTLALPLLLLLTAAKLWEVYCLRRKDAACANPLPPGTMGLPFFGETLQMVLQRRRFLQVKRSQYGRIYKTHLFGSPTVRVTGAENVRQILMGEHKLVSVHWPASVRTILGAGCLSNLHDNEHKYTKKVIAQAFSREALANYVPQMEEEVRCSVNLWLQSGPCVLVYPAIKRMMFRIAMRLLLGCDPQRMDREQEETLLEAFEEMSRNLFSLPIDVPFSGLYRGLRARNLIHAQIEENIKEKLQREPDEHCKDALQLLIDYSRRNGEPINLQALKESATELLFGGHGTTASAATSLTSFLALHKDVLEKVRKELETQGLLSTKPEEKKELSIEVLQQLKYTSCVIKETLRLSPPVAGGFRVALKTFVLNGYQIPKGWNVIYSIADTHGEADLFPDTDKFNPDRFLTPLPRDSSRFGFIPFGGGVRCCIGKEFAKILLKVFVVELCRNCDWELLNGSPAMTTSPIICPVDNLPAKFKPFSSSI.

C437 provides a ligand contact to heme.

Belongs to the cytochrome P450 family. Heme is required as a cofactor. In terms of tissue distribution, expressed primarily in ovary, brain and eyes.

Its subcellular location is the endoplasmic reticulum membrane. It localises to the microsome membrane. It catalyses the reaction all-trans-retinoate + reduced [NADPH--hemoprotein reductase] + O2 = all-trans-(4S)-hydroxyretinoate + oxidized [NADPH--hemoprotein reductase] + H2O + H(+). A cytochrome P450 monooxygenase involved in the metabolism of all-trans retinoic acid (atRA), a signaling molecule that binds to retinoic acid receptors and regulates gene transcription. May regulate at-RA signaling during hindbrain development. Mechanistically, uses molecular oxygen inserting one oxygen atom into a substrate, and reducing the second into a water molecule, with two electrons provided by NADPH via cytochrome P450 reductase (CPR; NADPH-ferrihemoprotein reductase). Catalyzes the hydroxylation of carbon hydrogen bonds of atRA primarily at C-4. Has no activity toward 9-cis and 13-cis retinoic acid stereoisomers. May play a role in the oxidative metabolism of xenobiotics such as tazarotenic acid. This Xenopus laevis (African clawed frog) protein is Cytochrome P450 26A1 (cyp26a1).